A 441-amino-acid polypeptide reads, in one-letter code: Histone-lysine N-methyltransferase set9 (441 aa).

Positions 108–221 (CKFEICSTNQ…PGEEITTFYS (114 aa)) constitute an SET domain.

Belongs to the class V-like SAM-binding methyltransferase superfamily. Histone-lysine methyltransferase family. Suvar4-20 subfamily.

It is found in the nucleus. It localises to the chromosome. The catalysed reaction is L-lysyl(20)-[histone H4] + 3 S-adenosyl-L-methionine = N(6),N(6),N(6)-trimethyl-L-lysyl(20)-[histone H4] + 3 S-adenosyl-L-homocysteine + 3 H(+). Functionally, histone methyltransferase that specifically trimethylates 'Lys-20' of histone H4 to form H4K20me3. H4 'Lys-20' methylation is apparently not involved in the regulation of gene expression or heterochromatin function but participates in DNA damage response by giving a 'histone mark' required for the recruitment of the checkpoint protein Crb2 to sites of DNA damage. The protein is Histone-lysine N-methyltransferase set9 (set9) of Schizosaccharomyces pombe (strain 972 / ATCC 24843) (Fission yeast).